Consider the following 185-residue polypeptide: MELTRYEIIKILMEYVTDEIVVCNIGIPSKELFKINDREKNFYMLGSMGLSSSIGHGLALSVNEKVIAIDGDGSVLMNMGSLATIGKTTPKDFLLLIVDNCAYGSTGNQETHSTCTDLYQVSKACGIDSIGVFNEEQLRDAVKLALSESGTKVIVAKARPHNENVPNINLVPTEIKHRFMNAIKK.

Belongs to the TPP enzyme family. As to quaternary structure, heterododecamer composed of 6 subunits alpha and 6 subunits beta. Thiamine diphosphate serves as cofactor.

It carries out the reaction 3-sulfopyruvate + H(+) = sulfoacetaldehyde + CO2. It participates in cofactor biosynthesis; coenzyme M biosynthesis; sulfoacetaldehyde from phosphoenolpyruvate and sulfite: step 4/4. Functionally, involved in the biosynthesis of the coenzyme M (2-mercaptoethanesulfonic acid). Catalyzes the decarboxylation of sulfopyruvate to sulfoacetaldehyde. The sequence is that of Sulfopyruvate decarboxylase subunit beta from Methanococcus maripaludis (strain DSM 14266 / JCM 13030 / NBRC 101832 / S2 / LL).